The primary structure comprises 245 residues: Demethylmenaquinone methyltransferase (245 aa).

Residues threonine 62, aspartate 80, aspartate 105 to alanine 106, and serine 122 contribute to the S-adenosyl-L-methionine site.

It belongs to the class I-like SAM-binding methyltransferase superfamily. MenG/UbiE family.

It catalyses the reaction a 2-demethylmenaquinol + S-adenosyl-L-methionine = a menaquinol + S-adenosyl-L-homocysteine + H(+). It participates in quinol/quinone metabolism; menaquinone biosynthesis; menaquinol from 1,4-dihydroxy-2-naphthoate: step 2/2. Functionally, methyltransferase required for the conversion of demethylmenaquinol (DMKH2) to menaquinol (MKH2). The chain is Demethylmenaquinone methyltransferase from Clavibacter sepedonicus (Clavibacter michiganensis subsp. sepedonicus).